The sequence spans 525 residues: Tigger transposable element-derived protein 2 (525 aa).

One can recognise an HTH psq-type domain in the interval 1–52 (MLGKRKRVVLTIKDKLDIIKKLEEGNSFKKLSVLYGIGESTVRDIKKNKERI). DNA-binding regions (H-T-H motif) lie at residues 28-48 (FKKL…IKKN) and 100-132 (TICA…FKQR). Positions 67–139 (KRKSMKSSTY…KQRHGIPKAA (73 aa)) constitute an HTH CENPB-type domain. Residues 168–385 (LLPEQIYGAD…IRSNTITRAW (218 aa)) enclose the DDE-1 domain.

The protein belongs to the tigger transposable element derived protein family.

Its subcellular location is the nucleus. The protein is Tigger transposable element-derived protein 2 (Tigd2) of Mus musculus (Mouse).